The following is a 568-amino-acid chain: Clathrin coat assembly protein AP180B (568 aa).

One can recognise an ENTH domain in the interval Met-1–His-127. The segment covering His-262–Pro-283 has biased composition (basic and acidic residues). The interval His-262–Lys-302 is disordered. Lys-282 participates in a covalent cross-link: Glycyl lysine isopeptide (Lys-Gly) (interchain with G-Cter in ubiquitin). Low complexity predominate over residues Ser-284–Asn-298. Phosphothreonine is present on Thr-449.

Belongs to the AP180 family. In terms of assembly, interacts with PAN1 and the clathrin heavy and light chains CHC1 and CLC1.

The protein localises to the bud. It is found in the bud neck. Its subcellular location is the cell membrane. It localises to the cytoplasm. In terms of biological role, involved in endocytosis and clathrin cage assembly. The protein is Clathrin coat assembly protein AP180B (YAP1802) of Saccharomyces cerevisiae (strain ATCC 204508 / S288c) (Baker's yeast).